A 442-amino-acid chain; its full sequence is MFDTIAAIATGNSIQAISIIRISGSDSFKIVKKIFTGKIGKNKTITYGNILNHERKIVDEVLVAWFEGTNNFTGENSVEIFCHGGIVVTNLVLQLLIANGARLAERGEFSRRSFLNKKMDFVKAEAINDLIHAKTIRQAQISVNKFDGKISKDIESYIDTLLYLIATCETNIDYPEYDDVENLHNETLLPKIKELIQKLNDLIKISEKASIIYNGLKIAIVGKPNVGKSSLLNALLNEERAIVTNEAGTTRDVIEASFQIDGFLFSISDTAGLREVQNNIENLGIQKTFETIEKSDIILHIIQPNEAENDFDKQIEIKSKNKIYLKILNKKDLIKNHNKQNHMIKISTLNKDIIELENKLSSYCNDVEWDNPNLIYSQNQLSMIKKSYLALSEAKEGLESGLTPDVVIIDITKAWESLVNIKGKADNELLLDKMFSNFCLGK.

3 residues coordinate (6S)-5-formyl-5,6,7,8-tetrahydrofolate: Arg-21, Glu-79, and Lys-118. The region spanning 215–365 (GLKIAIVGKP…LENKLSSYCN (151 aa)) is the TrmE-type G domain. GTP contacts are provided by residues 225-230 (NVGKSS), 244-250 (TNEAGTT), and 269-272 (DTAG). Mg(2+)-binding residues include Ser-229 and Thr-250. (6S)-5-formyl-5,6,7,8-tetrahydrofolate is bound at residue Lys-442.

The protein belongs to the TRAFAC class TrmE-Era-EngA-EngB-Septin-like GTPase superfamily. TrmE GTPase family. Homodimer. Heterotetramer of two MnmE and two MnmG subunits. It depends on K(+) as a cofactor.

The protein resides in the cytoplasm. Functionally, exhibits a very high intrinsic GTPase hydrolysis rate. Involved in the addition of a carboxymethylaminomethyl (cmnm) group at the wobble position (U34) of certain tRNAs, forming tRNA-cmnm(5)s(2)U34. In Mycoplasma mobile (strain ATCC 43663 / 163K / NCTC 11711) (Mesomycoplasma mobile), this protein is tRNA modification GTPase MnmE.